The primary structure comprises 651 residues: Probable export ATP-binding/permease protein Pfl01_2215 (651 aa).

The 239-residue stretch at 6-244 (LQLTGISRSF…LSNEDAVPKS (239 aa)) folds into the ABC transporter domain. 42-49 (GASGSGKS) provides a ligand contact to ATP. 5 helical membrane passes run 250–270 (LVAS…ALIS), 276–296 (LLTM…SAIG), 524–544 (LALL…IGVM), 585–605 (LGGA…SLFI), and 614–634 (LTSV…FGFV).

It belongs to the ABC transporter superfamily. Macrolide exporter (TC 3.A.1.122) family. As to quaternary structure, probably part of a tripartite efflux system, which is composed of an inner membrane transporter, a periplasmic membrane fusion protein, and an outer membrane component.

It is found in the cell inner membrane. Functionally, probably part of a tripartite efflux system. This is Probable export ATP-binding/permease protein Pfl01_2215 from Pseudomonas fluorescens (strain Pf0-1).